Consider the following 721-residue polypeptide: Dipeptidyl-peptidase 5 (721 aa).

Residues 1–18 (MGAFRWLSIAAAASTALA) form the signal peptide. N-linked (GlcNAc...) asparagine glycans are attached at residues N75, N94, N151, and N254. Residues 271–297 (ARPINGPDSPGTPKGIKGDSSSPVFSP) form a disordered region. N380 and N450 each carry an N-linked (GlcNAc...) asparagine glycan. The active-site Charge relay system is S560. N607 carries an N-linked (GlcNAc...) asparagine glycan. Active-site charge relay system residues include D643 and H675.

It belongs to the peptidase S9C family. N-glycosylated. Expressed in mycelia and conidia.

It localises to the secreted. Its function is as follows. May be involved in metabolism of dipeptides or may affect host defense mechanisms. Has a substrate specificity limited to the hydrolysis of X-Ala, His-Ser, and Ser-Tyr dipeptides at a neutral pH optimum. In Aspergillus fumigatus (strain ATCC MYA-4609 / CBS 101355 / FGSC A1100 / Af293) (Neosartorya fumigata), this protein is Dipeptidyl-peptidase 5.